The following is a 175-amino-acid chain: Phytochrome-interacting ankyrin-repeat protein 1 (175 aa).

ANK repeat units follow at residues 30–59 (RGWT…DVNA), 67–96 (KGMT…NMEA), and 102–131 (CGWT…FLPD).

In terms of assembly, interacts with phytochrome A (PHYA), both in Pr and Pfr forms.

It is found in the cytoplasm. It localises to the nucleus. The protein resides in the mitochondrion. The protein is Phytochrome-interacting ankyrin-repeat protein 1 of Arabidopsis thaliana (Mouse-ear cress).